A 366-amino-acid polypeptide reads, in one-letter code: Erythronate-4-phosphate dehydrogenase (366 aa).

The substrate site is built by Ser46 and Thr67. Positions 147 and 175 each coordinate NAD(+). Arg208 is a catalytic residue. An NAD(+)-binding site is contributed by Asp228. Glu233 is an active-site residue. His250 acts as the Proton donor in catalysis. NAD(+) is bound at residue Gly253. Tyr254 is a substrate binding site.

The protein belongs to the D-isomer specific 2-hydroxyacid dehydrogenase family. PdxB subfamily. Homodimer.

The protein resides in the cytoplasm. The catalysed reaction is 4-phospho-D-erythronate + NAD(+) = (R)-3-hydroxy-2-oxo-4-phosphooxybutanoate + NADH + H(+). Its pathway is cofactor biosynthesis; pyridoxine 5'-phosphate biosynthesis; pyridoxine 5'-phosphate from D-erythrose 4-phosphate: step 2/5. Catalyzes the oxidation of erythronate-4-phosphate to 3-hydroxy-2-oxo-4-phosphonooxybutanoate. The sequence is that of Erythronate-4-phosphate dehydrogenase from Coxiella burnetii (strain RSA 331 / Henzerling II).